The chain runs to 58 residues: Small ribosomal subunit protein eS27 (58 aa).

4 residues coordinate Zn(2+): Cys-10, Cys-13, Cys-29, and Cys-32. The C4-type zinc-finger motif lies at 10–32 (CPDCEHEQVIFDHPSTIVKCIIC).

It belongs to the eukaryotic ribosomal protein eS27 family. As to quaternary structure, part of the 30S ribosomal subunit. Zn(2+) is required as a cofactor.

The chain is Small ribosomal subunit protein eS27 from Archaeoglobus fulgidus (strain ATCC 49558 / DSM 4304 / JCM 9628 / NBRC 100126 / VC-16).